We begin with the raw amino-acid sequence, 500 residues long: MSRRFPIQVAQSEIPPIAWGLWRMVYRLWLHPLSGYPGPRLAAVSNLPYFAWTCTGNLHLRLQELHKVYGDVIRIRPNALTYRTPEAWTDIYGHRKPGTLPFSKDPEFFMPAQAGSSHMINANEKDHTRQKRLLNHAFSERSLRQQEHLIMGYIDLFIQRLRGQARMGAETVNMEEWLNFLTFDIIGDLAFGEPFGCLQNSEYHPWVATIFKSIKTGAILRALNIYPILLGFIRRFLPKSLVQKRIAHYQMSKDRVTRRLQTETSRPDFISYILKYNDDRGMSTPEIEMNAALLIQAGSETTATVLAACLYFLQKNAACHRRLVQDIRSAFTQETDINFLSAAQLPYMNGVIEESLRLFPPAPGIGPRVVPKGGARICGRYVPGGVSVSVGHYSTFRSARNFTRPNEFLPQRWLDRDAESEFASDQTMALQPFSYGPRACIGRNLAYAEMRTILAKILWHFDVQLDERSADWANSKSYIVWEKGPLWLKLHPRNVPQETD.

Position 440 (cysteine 440) interacts with heme.

This sequence belongs to the cytochrome P450 family. Heme is required as a cofactor.

It functions in the pathway secondary metabolite biosynthesis; terpenoid biosynthesis. Its function is as follows. Cytochrome P450 monooxygenase; part of the gene cluster that mediates the biosynthesis of astellolides, drimane-type sesquiterpene esters that show antimicrobial, anti-inflammatory, and anti-tumor activities. The first step in astellolide biosynthesis is performed by the sesquiterpene cyclase astC that catalyzes the formation of drimanyl pyrophosphate from farnesyl pyrophosphate. Drimanyl pyrophosphate is then dephosphorylated by the sesquiterpene phosphatase astI to produce drimanyl monophosphate which is further dephosphorylated to drim-8-ene-11-ol by atsK. Drim-8-ene-11-ol is converted to confertifolin, probably by the cytochrome P450 monooxygenase astD and/or the dehydrogenase astE. The cytochrome P450 monooxygenases astB, astF and astJ then hydroxylate confertifolin at C6, C14, or C15 to form trihydroxy confertifolin. The nonribosomal peptide synthetase astA catalyzes ester bond formation between trihydroxy contifolin and benzoic acid (BA) or 4-hydroxy benzoic acid (4HBA), leading to the formation of dideacetyl astellolides A and B, respectively. Finally, the O-acetyltransferase astG converts dideacetyl astellolides A and B into deacetyl astellolides A and B. The sequence is that of Cytochrome P450 monooxygenase astJ from Aspergillus oryzae (strain ATCC 42149 / RIB 40) (Yellow koji mold).